The sequence spans 682 residues: Potassium-transporting ATPase ATP-binding subunit (682 aa).

4 helical membrane-spanning segments follow: residues 34 to 54, 62 to 82, 219 to 239, and 254 to 274; these read PVMF…IAMA, ALFS…ANFA, IALT…TATL, and VLVA…LSAI. The active-site 4-aspartylphosphate intermediate is Asp307. Residues Asp344, Glu348, 377–384, and Lys395 contribute to the ATP site; that span reads FTAQSRMS. Mg(2+)-binding residues include Asp518 and Asp522. 3 helical membrane-spanning segments follow: residues 588 to 608, 616 to 636, and 656 to 676; these read FAII…LNIM, AILS…PLAL, and IYGL…DLLL.

Belongs to the cation transport ATPase (P-type) (TC 3.A.3) family. Type IA subfamily. As to quaternary structure, the system is composed of three essential subunits: KdpA, KdpB and KdpC.

It is found in the cell inner membrane. It catalyses the reaction K(+)(out) + ATP + H2O = K(+)(in) + ADP + phosphate + H(+). In terms of biological role, part of the high-affinity ATP-driven potassium transport (or Kdp) system, which catalyzes the hydrolysis of ATP coupled with the electrogenic transport of potassium into the cytoplasm. This subunit is responsible for energy coupling to the transport system and for the release of the potassium ions to the cytoplasm. The protein is Potassium-transporting ATPase ATP-binding subunit of Escherichia coli O8 (strain IAI1).